A 212-amino-acid polypeptide reads, in one-letter code: Uracil phosphoribosyltransferase (212 aa).

5-phospho-alpha-D-ribose 1-diphosphate-binding positions include Arg-78, Arg-103, and 130–138 (DPMLATGSS). Uracil-binding positions include Ile-193 and 198–200 (GDA). A 5-phospho-alpha-D-ribose 1-diphosphate-binding site is contributed by Asp-199.

The protein belongs to the UPRTase family. Mg(2+) serves as cofactor.

The enzyme catalyses UMP + diphosphate = 5-phospho-alpha-D-ribose 1-diphosphate + uracil. Its pathway is pyrimidine metabolism; UMP biosynthesis via salvage pathway; UMP from uracil: step 1/1. With respect to regulation, allosterically activated by GTP. Functionally, catalyzes the conversion of uracil and 5-phospho-alpha-D-ribose 1-diphosphate (PRPP) to UMP and diphosphate. In Pseudomonas fluorescens (strain SBW25), this protein is Uracil phosphoribosyltransferase.